Here is a 657-residue protein sequence, read N- to C-terminus: MSPTPALFSLPEARTRFTKSTREALNNKNIKPLLTAFSQLPGSENEKKCTLDQAFRGVLEEEIINHSACENVLAIISLAIGGVTESVCTASTPFVLLGDVLDCLPLDQCDTIFTFVEKNVATWKSNTFYSAGKNYLLRMCNDLLRRLSKSQNTVFCGRIQLFLARLFPLSEKSGLNLQSQFNLENVTVFNTNEQESTLGQKHTEDREEGMDVEEGEMGDDEAPTTCSIPIDYNLYRKFWSLQDYFRNPVQCYEKISWKTFLKYSEEVLAVFKSYKLDDTQASRKKMEELKTGGEHVYFAKFLTSEKLMDLQLSDSNFRRHILLQYLILFQYLKGQVKFKSSNYVLTDEQSLWIEDTTKSVYQLLSENPPDGERFSKMVEHILNTEENWNSWKNEGCPSFVKERASDTKPTRVVRKRAAPEDFLGKGPNKKILIGNEELTRLWNLCPDNMEACKSETREYMPTLEEFFEEAIEQADPENMVESEYKAVNNSNYGWRALRLLARRSPHFFQPTNQQFKSLPEYLENMVIKLAKELPPPSEEIKTGEDEDEEDNDALLKENESPDVRRDKPITGEQIESFANKLGEQWKILAPYLEIKDSDIRQIECDSEDMKMRAKQLLVAWQDQEGVHATTDNLISALNKSGLSDLAESLTNDTETNS.

Met1 carries the N-acetylmethionine modification. Residue Ser2 is modified to Phosphoserine. Thr4 carries the post-translational modification Phosphothreonine. Residue Lys31 forms a Glycyl lysine isopeptide (Lys-Gly) (interchain with G-Cter in SUMO2) linkage. The residue at position 133 (Lys133) is an N6-acetyllysine. The segment at 133-167 (KNYLLRMCNDLLRRLSKSQNTVFCGRIQLFLARLF) is dock domain; interaction with THOC2. A disordered region spans residues 194 to 221 (QESTLGQKHTEDREEGMDVEEGEMGDDE). Residues 206–221 (REEGMDVEEGEMGDDE) are compositionally biased toward acidic residues. The segment at 227-397 (SIPIDYNLYR…WNSWKNEGCP (171 aa)) is dock domain; interaction with THOC2. The residue at position 300 (Lys300) is an N6-acetyllysine. A Glycyl lysine isopeptide (Lys-Gly) (interchain with G-Cter in SUMO2) cross-link involves residue Lys408. A Nuclear localization signal motif is present at residues 414-430 (RKRAAPEDFLGKGPNKK). Positions 533–569 (LPPPSEEIKTGEDEDEEDNDALLKENESPDVRRDKPI) are disordered. Phosphoserine is present on Ser537. Thr542 carries the phosphothreonine modification. The segment covering 553-569 (ALLKENESPDVRRDKPI) has biased composition (basic and acidic residues). Phosphoserine is present on Ser560. A Death domain is found at 570–653 (TGEQIESFAN…DLAESLTNDT (84 aa)). Lys580 is covalently cross-linked (Glycyl lysine isopeptide (Lys-Gly) (interchain with G-Cter in SUMO2)). Lys595 is covalently cross-linked (Glycyl lysine isopeptide (Lys-Gly) (interchain with G-Cter in SUMO1); alternate). Residue Lys595 forms a Glycyl lysine isopeptide (Lys-Gly) (interchain with G-Cter in SUMO2); alternate linkage.

It belongs to the THOC1 family. In terms of assembly, component of the THO subcomplex, which is composed of THOC1, THOC2, THOC3, THOC5, THOC6 and THOC7. The THO subcomplex interacts with DDX39B to form the THO-DDX39B complex which multimerizes into a 28-subunit tetrameric assembly. Component of the transcription/export (TREX) complex at least composed of ALYREF/THOC4, DDX39B, SARNP/CIP29, CHTOP and the THO subcomplex; in the complex interacts with THOC2, THOC5 and THOC7. TREX seems to have a dynamic structure involving ATP-dependent remodeling. Binds to the hypophosphorylated form of RB1. Interacts with RNA polymerase II. Interacts with LUZP4. Interacts with THOC5. In terms of processing, expression is altered specifically during apoptosis and is accompanied by the appearance of novel forms with smaller apparent molecular mass. Polyubiquitinated, leading to proteasomal degradation; probably involves NEDD4. In the inner ear, specifically expressed in inner and outer hair cells (at protein level).

Its subcellular location is the nucleus. It localises to the nucleoplasm. The protein localises to the nucleus matrix. The protein resides in the cytoplasm. It is found in the cytosol. Its function is as follows. Component of the THO subcomplex of the TREX complex which is thought to couple mRNA transcription, processing and nuclear export, and which specifically associates with spliced mRNA and not with unspliced pre-mRNA. Required for efficient export of polyadenylated RNA. The THOC1-THOC2-THOC3 core complex alone is sufficient to bind export factor NXF1-NXT1 and promote ATPase activity of DDX39B. TREX is recruited to spliced mRNAs by a transcription-independent mechanism, binds to mRNA upstream of the exon-junction complex (EJC) and is recruited in a splicing- and cap-dependent manner to a region near the 5' end of the mRNA where it functions in mRNA export to the cytoplasm via the TAP/NXF1 pathway. Regulates transcriptional elongation of a subset of genes. Involved in genome stability by preventing co-transcriptional R-loop formation. May play a role in hair cell formation, hence may be involved in hearing. In terms of biological role, participates in an apoptotic pathway which is characterized by activation of caspase-6, increases in the expression of BAK1 and BCL2L1 and activation of NF-kappa-B. This pathway does not require p53/TP53, nor does the presence of p53/TP53 affect the efficiency of cell killing. Activates a G2/M cell cycle checkpoint prior to the onset of apoptosis. Apoptosis is inhibited by association with RB1. Essential for early embryonic development. Required for normal gene expression during postnatal testis development. This chain is THO complex subunit 1 (Thoc1), found in Mus musculus (Mouse).